We begin with the raw amino-acid sequence, 450 residues long: MEASGTDDVEKLKSKFLSAWHNMKYSWVLKTKTYFKRNSPVFLLGKCYHFKYEDSSVTSDGGSNSGSESKEDLSGNVDEFRKDFISRIWLTYREEFPQIETSSWTTDCGWGCTLRTGQMLLAQGLIVHFLGRDWTWTEALDIFSSESEFWTANTARKLTPSLETSFSENNECVSSNKQPLHNCDKKSNSEDFHQKIISWFADYPLAYFGLHQLVKLGKNSGKVAGDWYGPAVVSHLLRKAIEESSDPELQGITIYVAQDCTIYSADVYDLQCNKGTEKAVVILVPVRLGGERTNMEYFEFVKGILSLEFCIGIIGGKPKQSYYFVGFQDDSLIYMDPHYCQSFVDVSVKNFPLESFHCPSPKKMSFKKMDPSCTIGFYCRNAREFEKAAEELTKVLKSSTKQNYPLFTFVNGHAQDFDFVCTPVYDQNDLFTEDEKKRLKRFSTEEFVLL.

Cys112 acts as the Nucleophile in catalysis. Active-site residues include Asp336 and His338.

The protein belongs to the peptidase C54 family.

The protein localises to the cytoplasm. It carries out the reaction [protein]-C-terminal L-amino acid-glycyl-phosphatidylethanolamide + H2O = [protein]-C-terminal L-amino acid-glycine + a 1,2-diacyl-sn-glycero-3-phosphoethanolamine. Functionally, cysteine protease that plays a key role in autophagy by mediating both proteolytic activation and delipidation of ATG8 family proteins. The protease activity is required for proteolytic activation of ATG8 family proteins: cleaves the C-terminal amino acid of ATG8 proteins to reveal a C-terminal glycine. Exposure of the glycine at the C-terminus is essential for ATG8 proteins conjugation to phosphatidylethanolamine (PE) and insertion to membranes, which is necessary for autophagy. In addition to the protease activity, also mediates delipidation of ATG8 family proteins. Catalyzes delipidation of PE-conjugated forms of ATG8 proteins during macroautophagy. This Xenopus tropicalis (Western clawed frog) protein is Cysteine protease ATG4C.